The primary structure comprises 125 residues: MANLEKIVEDLSALTVLEAAELAKMLEEKWGVSAAAPVAVAAAGGAAPAAAAEEKTEFDVVLTEAGAKKIEVIKLVREVVPALGLKEAKDLVEGAPKTVKEAVSKADAEELKKKFEAAGAKVELK.

Belongs to the bacterial ribosomal protein bL12 family. Homodimer. Part of the ribosomal stalk of the 50S ribosomal subunit. Forms a multimeric L10(L12)X complex, where L10 forms an elongated spine to which 2 to 4 L12 dimers bind in a sequential fashion. Binds GTP-bound translation factors.

In terms of biological role, forms part of the ribosomal stalk which helps the ribosome interact with GTP-bound translation factors. Is thus essential for accurate translation. This Hyphomonas neptunium (strain ATCC 15444) protein is Large ribosomal subunit protein bL12.